A 901-amino-acid polypeptide reads, in one-letter code: Protein translocase subunit SecA (901 aa).

ATP-binding positions include Q87, 105 to 109 (GEGKT), and D512. 4 residues coordinate Zn(2+): C885, C887, C896, and H897.

The protein belongs to the SecA family. As to quaternary structure, monomer and homodimer. Part of the essential Sec protein translocation apparatus which comprises SecA, SecYEG and auxiliary proteins SecDF-YajC and YidC. Zn(2+) is required as a cofactor.

The protein resides in the cell inner membrane. It is found in the cytoplasm. The enzyme catalyses ATP + H2O + cellular proteinSide 1 = ADP + phosphate + cellular proteinSide 2.. Part of the Sec protein translocase complex. Interacts with the SecYEG preprotein conducting channel. Has a central role in coupling the hydrolysis of ATP to the transfer of proteins into and across the cell membrane, serving both as a receptor for the preprotein-SecB complex and as an ATP-driven molecular motor driving the stepwise translocation of polypeptide chains across the membrane. The protein is Protein translocase subunit SecA of Salmonella paratyphi B (strain ATCC BAA-1250 / SPB7).